The chain runs to 117 residues: Large ribosomal subunit protein uL18 (117 aa).

The protein belongs to the universal ribosomal protein uL18 family. In terms of assembly, part of the 50S ribosomal subunit; part of the 5S rRNA/L5/L18/L25 subcomplex. Contacts the 5S and 23S rRNAs.

In terms of biological role, this is one of the proteins that bind and probably mediate the attachment of the 5S RNA into the large ribosomal subunit, where it forms part of the central protuberance. This chain is Large ribosomal subunit protein uL18, found in Actinobacillus pleuropneumoniae serotype 5b (strain L20).